The chain runs to 294 residues: 4-hydroxy-tetrahydrodipicolinate synthase (294 aa).

Thr-47 is a pyruvate binding site. Residue Tyr-135 is the Proton donor/acceptor of the active site. Lys-163 (schiff-base intermediate with substrate) is an active-site residue. A pyruvate-binding site is contributed by Thr-205.

The protein belongs to the DapA family. As to quaternary structure, homotetramer; dimer of dimers.

It is found in the cytoplasm. The enzyme catalyses L-aspartate 4-semialdehyde + pyruvate = (2S,4S)-4-hydroxy-2,3,4,5-tetrahydrodipicolinate + H2O + H(+). It functions in the pathway amino-acid biosynthesis; L-lysine biosynthesis via DAP pathway; (S)-tetrahydrodipicolinate from L-aspartate: step 3/4. In terms of biological role, catalyzes the condensation of (S)-aspartate-beta-semialdehyde [(S)-ASA] and pyruvate to 4-hydroxy-tetrahydrodipicolinate (HTPA). The sequence is that of 4-hydroxy-tetrahydrodipicolinate synthase from Rickettsia felis (strain ATCC VR-1525 / URRWXCal2) (Rickettsia azadi).